The chain runs to 387 residues: Muscleblind-like protein 1 (387 aa).

Thr-6 carries the post-translational modification Phosphothreonine. C3H1-type zinc fingers lie at residues 13–41 (WLTLEVCREFQRGTCSRPDTECKFAHPSK), 47–73 (NGRVIACFDSLKGRCSRENCKYLHPPP), 178–206 (TDRLEVCREYQRGNCNRGENDCRFAHPAD), and 214–240 (DNTVTVCMDYIKGRCSREKCKYFHPPA).

The protein belongs to the muscleblind family. In terms of assembly, interacts with DDX1 and YBX1. Interacts with HNRNPH1; the interaction in RNA-independent. Interacts with RBPMS; the interaction allows cooperative assembly of RNA-bound stable cell-specific alternative splicing regulatory complexes.

The protein localises to the nucleus. It is found in the cytoplasm. The protein resides in the cytoplasmic granule. Its function is as follows. Mediates pre-mRNA alternative splicing regulation. Acts either as activator or repressor of splicing on specific pre-mRNA targets. Inhibits cardiac troponin-T (TNNT2) pre-mRNA exon inclusion but induces insulin receptor (IR) pre-mRNA exon inclusion in muscle. Antagonizes the alternative splicing activity pattern of CELF proteins. Regulates the TNNT2 exon 5 skipping through competition with U2AF2. Inhibits the formation of the spliceosome A complex on intron 4 of TNNT2 pre-mRNA. Binds to the stem-loop structure within the polypyrimidine tract of TNNT2 intron 4 during spliceosome assembly. Binds to the 5'-YGCU(U/G)Y-3'consensus sequence. Binds to the IR RNA. Binds to expanded CUG repeat RNA, which folds into a hairpin structure containing GC base pairs and bulged, unpaired U residues. Together with RNA binding proteins RBPMS and RBFOX2, activates vascular smooth muscle cells alternative splicing events. Regulates NCOR2 alternative splicing. The sequence is that of Muscleblind-like protein 1 from Rattus norvegicus (Rat).